The primary structure comprises 199 residues: Dephospho-CoA kinase (199 aa).

In terms of domain architecture, DPCK spans 3 to 199; sequence TLGVTGGIGS…ELYWAVTGGQ (197 aa). 11–16 is an ATP binding site; the sequence is GSGKTT.

The protein belongs to the CoaE family.

The protein localises to the cytoplasm. It carries out the reaction 3'-dephospho-CoA + ATP = ADP + CoA + H(+). It functions in the pathway cofactor biosynthesis; coenzyme A biosynthesis; CoA from (R)-pantothenate: step 5/5. Functionally, catalyzes the phosphorylation of the 3'-hydroxyl group of dephosphocoenzyme A to form coenzyme A. In Salinibacter ruber (strain DSM 13855 / M31), this protein is Dephospho-CoA kinase.